A 328-amino-acid polypeptide reads, in one-letter code: Malate dehydrogenase (328 aa).

11–17 (GAAGQIG) serves as a coordination point for NAD(+). Substrate-binding residues include Arg92 and Arg98. Residues Asn105, Gln112, and 129–131 (VGN) each bind NAD(+). The substrate site is built by Asn131 and Arg162. Residue His187 is the Proton acceptor of the active site.

This sequence belongs to the LDH/MDH superfamily. MDH type 2 family.

The catalysed reaction is (S)-malate + NAD(+) = oxaloacetate + NADH + H(+). Its function is as follows. Catalyzes the reversible oxidation of malate to oxaloacetate. This chain is Malate dehydrogenase, found in Coxiella burnetii (strain RSA 493 / Nine Mile phase I).